The chain runs to 90 residues: Small ribosomal subunit protein uS17 (90 aa).

It belongs to the universal ribosomal protein uS17 family. As to quaternary structure, part of the 30S ribosomal subunit.

Functionally, one of the primary rRNA binding proteins, it binds specifically to the 5'-end of 16S ribosomal RNA. The chain is Small ribosomal subunit protein uS17 from Burkholderia multivorans (strain ATCC 17616 / 249).